The following is a 236-amino-acid chain: CD81 antigen (236 aa).

Residues 1–12 (MGVEGCTKCIKY) lie on the Cytoplasmic side of the membrane. A helical transmembrane segment spans residues 13 to 33 (LLFVFNFVFWLAGGVILGVAL). Residues 34–63 (WLRHDPQTTTLLYLELGDKPAPSTFYVGIY) lie on the Extracellular side of the membrane. Residues 64 to 84 (ILIAVGAVMMFVGFLGCYGAI) traverse the membrane as a helical segment. Over 85–89 (QESQC) the chain is Cytoplasmic. A helical membrane pass occupies residues 90–112 (LLGTFFTCLVILFACEVAAGIWG). Topologically, residues 113–201 (FVNKDQIAKD…QKIDELFSGK (89 aa)) are extracellular. 2 disulfide bridges follow: cysteine 156–cysteine 190 and cysteine 157–cysteine 175. A helical transmembrane segment spans residues 202–224 (LYLIGIAAIVVAVIMIFEMILSM). Position 219 (glutamate 219) interacts with cholesterol. Topologically, residues 225 to 236 (VLCCGIRNSSVY) are cytoplasmic.

This sequence belongs to the tetraspanin (TM4SF) family. As to quaternary structure, homodimer. Part of a complex composed of CD19, CR2/CD21, CD81 and IFITM1/CD225 in the membrane of mature B cells. Interacts (via the second extracellular domain) with CD19; this interaction is initiated early during biosynthesis in the ER and enables trafficking of only properly folded CD19. Part of a complex that includes MHC class II/HLA-DR molecules and IFITM1. Interacts with IFITM1. Interacts with IFITM2 and IFITM3. Part of integrin-tetraspanin complex composed of CD9, CD81, beta-1 and beta-2 integrins in the membrane of monocyte/macrophages. Interacts (via the second extracellular domain) with integrin ITGAV:ITGB3. Interacts with CD247/CD3 zeta, ICAM1 and CD9 at the immune synapse on T cell membrane. Part of a GPCR-tetraspanin complex consisting at least of ADGRG1, CD81, possibly CD9, and GNA11 in which CD81 enhances the association of ADGRG1 with GNA11. Part of a complex composed of CD9, CD81, PTGFRN and IGSF8. Interacts directly with IGSF8. Interacts with CD53 and SCIMP. Interacts with SAMHD1 (via its C-terminus). Interacts with glypican GPC3 and with the transcriptional repressor HHEX; binding to GPC3 decreases the availability of free CD81 for binding to HHEX, resulting in nuclear translocation of HHEX and transcriptional repression. Interacts with CLDN1. Interacts with CLDN6 and CLDN9. Not glycosylated. Post-translationally, likely constitutively palmitoylated at low levels. Protein palmitoylation is up-regulated upon coligation of BCR and CD9-C2R-CD81 complexes in lipid rafts.

Its subcellular location is the cell membrane. The protein localises to the basolateral cell membrane. Its function is as follows. Structural component of specialized membrane microdomains known as tetraspanin-enriched microdomains (TERMs), which act as platforms for receptor clustering and signaling. Essential for trafficking and compartmentalization of CD19 receptor on the surface of activated B cells. Upon initial encounter with microbial pathogens, enables the assembly of CD19-CR2/CD21 and B cell receptor (BCR) complexes at signaling TERMs, lowering the threshold dose of antigen required to trigger B cell clonal expansion and antibody production. In T cells, facilitates the localization of CD247/CD3 zeta at antigen-induced synapses with B cells, providing for costimulation and polarization toward T helper type 2 phenotype. Present in MHC class II compartments, may also play a role in antigen presentation. Can act both as positive and negative regulator of homotypic or heterotypic cell-cell fusion processes. Positively regulates sperm-egg fusion and may be involved in acrosome reaction. In myoblasts, associates with CD9 and PTGFRN and inhibits myotube fusion during muscle regeneration. In macrophages, associates with CD9 and beta-1 and beta-2 integrins, and prevents macrophage fusion into multinucleated giant cells specialized in ingesting complement-opsonized large particles. Also prevents the fusion of mononuclear cell progenitors into osteoclasts in charge of bone resorption. May regulate the compartmentalization of enzymatic activities. In T cells, defines the subcellular localization of dNTPase SAMHD1 and permits its degradation by the proteasome, thereby controlling intracellular dNTP levels. Also involved in cell adhesion and motility. Positively regulates integrin-mediated adhesion of macrophages, particularly relevant for the inflammatory response in the lung. This chain is CD81 antigen (Cd81), found in Rattus norvegicus (Rat).